The following is a 48-amino-acid chain: Ribulose bisphosphate carboxylase large chain (48 aa).

It belongs to the RuBisCO large chain family. Type I subfamily. Heterohexadecamer of 8 large chains and 8 small chains.

Its subcellular location is the plastid. It localises to the chloroplast. It carries out the reaction 2 (2R)-3-phosphoglycerate + 2 H(+) = D-ribulose 1,5-bisphosphate + CO2 + H2O. The catalysed reaction is D-ribulose 1,5-bisphosphate + O2 = 2-phosphoglycolate + (2R)-3-phosphoglycerate + 2 H(+). RuBisCO catalyzes two reactions: the carboxylation of D-ribulose 1,5-bisphosphate, the primary event in carbon dioxide fixation, as well as the oxidative fragmentation of the pentose substrate in the photorespiration process. Both reactions occur simultaneously and in competition at the same active site. The protein is Ribulose bisphosphate carboxylase large chain (rbcL) of Pinus pinaster (Maritime pine).